Here is a 668-residue protein sequence, read N- to C-terminus: Transketolase 2 (668 aa).

Substrate is bound at residue histidine 26. Thiamine diphosphate contacts are provided by residues histidine 66 and 114-116; that span reads GPL. A Mg(2+)-binding site is contributed by aspartate 155. Thiamine diphosphate-binding residues include glycine 156 and asparagine 185. Mg(2+) contacts are provided by asparagine 185 and isoleucine 187. Substrate-binding residues include histidine 261, arginine 358, and serine 385. Residue histidine 261 participates in thiamine diphosphate binding. The Proton donor role is filled by glutamate 413. Position 439 (phenylalanine 439) interacts with thiamine diphosphate. Residues histidine 463, aspartate 471, and arginine 522 each contribute to the substrate site.

This sequence belongs to the transketolase family. Homodimer. The cofactor is Mg(2+). It depends on Ca(2+) as a cofactor. Mn(2+) serves as cofactor. Co(2+) is required as a cofactor. Requires thiamine diphosphate as cofactor.

The catalysed reaction is D-sedoheptulose 7-phosphate + D-glyceraldehyde 3-phosphate = aldehydo-D-ribose 5-phosphate + D-xylulose 5-phosphate. Catalyzes the transfer of a two-carbon ketol group from a ketose donor to an aldose acceptor, via a covalent intermediate with the cofactor thiamine pyrophosphate. This is Transketolase 2 (tktB) from Pasteurella multocida (strain Pm70).